A 239-amino-acid chain; its full sequence is Probable transcriptional regulatory protein BAA_0622 (239 aa).

This sequence belongs to the TACO1 family. YeeN subfamily.

The protein resides in the cytoplasm. The protein is Probable transcriptional regulatory protein BAA_0622 of Bacillus anthracis (strain A0248).